A 165-amino-acid chain; its full sequence is MSLPESDKQPRAQRTMGFTELKTWLRHRHPMVYLDRVLDYEPGVQIKTLMAVSGQTDALAGHFPERAIYPASHLMQAISQSAIILFQLSTSRLAGDEVTLVGSIKSRFTRPVVPGDLVIFQLDCESLRPDFFTFSCRATVDGRSVGMLKGSLVRKSLADLGEHLW.

Histidine 62 is an active-site residue.

It belongs to the thioester dehydratase family.

Its pathway is phytotoxin biosynthesis; coronatine biosynthesis. This is Coronafacic acid dehydratase (cfa2) from Pseudomonas savastanoi pv. glycinea (Pseudomonas syringae pv. glycinea).